A 369-amino-acid chain; its full sequence is MWIKELNLTHYRNYQQASAAFSPGLNVFIGDNAQGKTNFLEAIYFLSVTRSHRTKSDKDLIYFDERDCSISGTLERLSGRVQLEILLSDKGRITKINTLKQAKLSDYIGAMMVVLFAPEDLQLVKGSPNLRRKFMDIDLGQIKPVYLSDLSHYNHVLKQRNAYLKSVHQLDNDFLSVLDEQLVTYGSRVMAHRLAFVQSLAKEANKHHQAISNGLEKLSISYQASVSFEHQQEIYQQFMNQLKTTHQRDFLRKNTGVGPHRDDLVFYINDMNANFASQGQHRSLILSLKMAEVSLMKQLTGDNPILLLDDVMSELDNTRQTKLLGAVKKENVQTFITTTSLEHLSQLPKDISLFKVNKGTIERDSIMID.

30 to 37 serves as a coordination point for ATP; the sequence is GDNAQGKT.

Belongs to the RecF family.

It is found in the cytoplasm. In terms of biological role, the RecF protein is involved in DNA metabolism; it is required for DNA replication and normal SOS inducibility. RecF binds preferentially to single-stranded, linear DNA. It also seems to bind ATP. The sequence is that of DNA replication and repair protein RecF from Streptococcus equi subsp. equi (strain 4047).